The sequence spans 48 residues: M-oxotoxin-Ot1b (48 aa).

It localises to the secreted. Its subcellular location is the target cell membrane. Functionally, disrupts cell membranes, particularly those rich in phosphocholine, through formation of pores. Has antimicrobial activity, hemolytic activity and insecticidal activity. This Oxyopes takobius (Lynx spider) protein is M-oxotoxin-Ot1b.